The chain runs to 428 residues: Phosphomethylpyrimidine synthase 2 (428 aa).

Residues methionine 94, tyrosine 123, histidine 162, 184–186 (SRG), 225–228 (NGMR), and glutamate 264 contribute to the substrate site. Histidine 268 lines the Zn(2+) pocket. Tyrosine 291 contacts substrate. Position 332 (histidine 332) interacts with Zn(2+). [4Fe-4S] cluster is bound by residues cysteine 408, cysteine 411, and cysteine 415.

It belongs to the ThiC family. Requires [4Fe-4S] cluster as cofactor.

It carries out the reaction 5-amino-1-(5-phospho-beta-D-ribosyl)imidazole + S-adenosyl-L-methionine = 4-amino-2-methyl-5-(phosphooxymethyl)pyrimidine + CO + 5'-deoxyadenosine + formate + L-methionine + 3 H(+). It participates in cofactor biosynthesis; thiamine diphosphate biosynthesis. Functionally, catalyzes the synthesis of the hydroxymethylpyrimidine phosphate (HMP-P) moiety of thiamine from aminoimidazole ribotide (AIR) in a radical S-adenosyl-L-methionine (SAM)-dependent reaction. In Methanosarcina mazei (strain ATCC BAA-159 / DSM 3647 / Goe1 / Go1 / JCM 11833 / OCM 88) (Methanosarcina frisia), this protein is Phosphomethylpyrimidine synthase 2.